The following is a 570-amino-acid chain: Hydroxylamine reductase (570 aa).

Cysteine 5, cysteine 8, cysteine 17, and cysteine 23 together coordinate [4Fe-4S] cluster. Positions 266, 290, 334, 425, 453, 478, 513, and 515 each coordinate hybrid [4Fe-2O-2S] cluster. Residue cysteine 425 is modified to Cysteine persulfide.

The protein belongs to the HCP family. [4Fe-4S] cluster serves as cofactor. It depends on hybrid [4Fe-2O-2S] cluster as a cofactor.

It localises to the cytoplasm. The catalysed reaction is A + NH4(+) + H2O = hydroxylamine + AH2 + H(+). Functionally, catalyzes the reduction of hydroxylamine to form NH(3) and H(2)O. The polypeptide is Hydroxylamine reductase (Clostridium botulinum (strain Kyoto / Type A2)).